We begin with the raw amino-acid sequence, 851 residues long: Putative serine/threonine-protein kinase 019R (851 aa).

Disordered stretches follow at residues 1–24 (MATN…RTIK), 61–91 (PRVA…RGGP), 104–160 (GGAS…KRGG), 190–216 (GLSP…ARRS), and 340–400 (SRPS…GEPR). Residues 125 to 141 (ARRQSPAEAAEASPCPE) show a composition bias toward low complexity. Residues 196-216 (SHMRKSPARRSPARRSPARRS) are compositionally biased toward basic residues. Low complexity predominate over residues 340–366 (SRPSGVSRTSGTSGSSGSSASSRPPNS). Residues 456-851 (AVSDNVIGQG…GEREIESFTM (396 aa)) enclose the Protein kinase domain. ATP-binding positions include 462 to 470 (IGQGSWGSV) and lysine 485. Catalysis depends on aspartate 608, which acts as the Proton acceptor.

The protein belongs to the protein kinase superfamily. Ser/Thr protein kinase family.

The enzyme catalyses L-seryl-[protein] + ATP = O-phospho-L-seryl-[protein] + ADP + H(+). It catalyses the reaction L-threonyl-[protein] + ATP = O-phospho-L-threonyl-[protein] + ADP + H(+). The chain is Putative serine/threonine-protein kinase 019R from Dryophytes versicolor (chameleon treefrog).